The primary structure comprises 509 residues: ATP synthase subunit alpha (509 aa).

Position 169–176 (169–176 (GDRKTGKT)) interacts with ATP.

Belongs to the ATPase alpha/beta chains family. In terms of assembly, F-type ATPases have 2 components, CF(1) - the catalytic core - and CF(0) - the membrane proton channel. CF(1) has five subunits: alpha(3), beta(3), gamma(1), delta(1), epsilon(1). CF(0) has three main subunits: a(1), b(2) and c(9-12). The alpha and beta chains form an alternating ring which encloses part of the gamma chain. CF(1) is attached to CF(0) by a central stalk formed by the gamma and epsilon chains, while a peripheral stalk is formed by the delta and b chains.

The protein localises to the cell membrane. It catalyses the reaction ATP + H2O + 4 H(+)(in) = ADP + phosphate + 5 H(+)(out). Its function is as follows. Produces ATP from ADP in the presence of a proton gradient across the membrane. The alpha chain is a regulatory subunit. The protein is ATP synthase subunit alpha of Limosilactobacillus reuteri (strain DSM 20016) (Lactobacillus reuteri).